A 467-amino-acid polypeptide reads, in one-letter code: Indoleacetamide hydrolase (467 aa).

Residues lysine 74 and serine 149 each act as charge relay system in the active site. The active-site Acyl-ester intermediate is the serine 173.

The protein belongs to the amidase family.

It functions in the pathway plant hormone metabolism; auxin biosynthesis. Hydrolyzes indole-3-acetamide (IAM) into indole-3-acetic acid (IAA). The sequence is that of Indoleacetamide hydrolase (TA-iaaH) from Agrobacterium vitis (Rhizobium vitis).